The sequence spans 173 residues: Large ribosomal subunit protein uL10 (173 aa).

Belongs to the universal ribosomal protein uL10 family. Part of the ribosomal stalk of the 50S ribosomal subunit. The N-terminus interacts with L11 and the large rRNA to form the base of the stalk. The C-terminus forms an elongated spine to which L12 dimers bind in a sequential fashion forming a multimeric L10(L12)X complex.

Its function is as follows. Forms part of the ribosomal stalk, playing a central role in the interaction of the ribosome with GTP-bound translation factors. The sequence is that of Large ribosomal subunit protein uL10 from Christiangramia forsetii (strain DSM 17595 / CGMCC 1.15422 / KT0803) (Gramella forsetii).